The sequence spans 206 residues: Probable GTP-binding protein EngB (206 aa).

An EngB-type G domain is found at 23 to 197 (QGIEVAFAGR…ERVLDKWFGY (175 aa)). GTP contacts are provided by residues 31-38 (GRSNAGKS), 58-62 (GRTQL), 76-79 (DLPG), 143-146 (TKAD), and 176-178 (FSS). Positions 38 and 60 each coordinate Mg(2+).

It belongs to the TRAFAC class TrmE-Era-EngA-EngB-Septin-like GTPase superfamily. EngB GTPase family. Requires Mg(2+) as cofactor.

In terms of biological role, necessary for normal cell division and for the maintenance of normal septation. The sequence is that of Probable GTP-binding protein EngB from Pseudoalteromonas atlantica (strain T6c / ATCC BAA-1087).